A 449-amino-acid polypeptide reads, in one-letter code: Histidinol dehydrogenase (449 aa).

NAD(+)-binding residues include Tyr136, Gln204, and Asn232. Residues Thr255, Gln277, and His280 each contribute to the substrate site. The Zn(2+) site is built by Gln277 and His280. Catalysis depends on proton acceptor residues Glu346 and His347. Positions 347, 380, 434, and 439 each coordinate substrate. A Zn(2+)-binding site is contributed by Asp380. His439 lines the Zn(2+) pocket.

This sequence belongs to the histidinol dehydrogenase family. The cofactor is Zn(2+).

The catalysed reaction is L-histidinol + 2 NAD(+) + H2O = L-histidine + 2 NADH + 3 H(+). The protein operates within amino-acid biosynthesis; L-histidine biosynthesis; L-histidine from 5-phospho-alpha-D-ribose 1-diphosphate: step 9/9. Its function is as follows. Catalyzes the sequential NAD-dependent oxidations of L-histidinol to L-histidinaldehyde and then to L-histidine. The protein is Histidinol dehydrogenase (hisD) of Mycobacterium leprae (strain TN).